The following is a 180-amino-acid chain: Nucleoside triphosphate/diphosphate phosphatase (180 aa).

The Proton donor role is filled by R26. 6 residues coordinate Mg(2+): N90, D106, D108, D110, D123, and E126.

The protein belongs to the Ntdp family. Requires Mg(2+) as cofactor.

It catalyses the reaction a ribonucleoside 5'-triphosphate + H2O = a ribonucleoside 5'-diphosphate + phosphate + H(+). The catalysed reaction is a ribonucleoside 5'-diphosphate + H2O = a ribonucleoside 5'-phosphate + phosphate + H(+). Functionally, has nucleoside phosphatase activity towards nucleoside triphosphates and nucleoside diphosphates. The chain is Nucleoside triphosphate/diphosphate phosphatase from Staphylococcus epidermidis (strain ATCC 35984 / DSM 28319 / BCRC 17069 / CCUG 31568 / BM 3577 / RP62A).